Consider the following 304-residue polypeptide: Oxygen-dependent coproporphyrinogen-III oxidase (304 aa).

Serine 93 is a binding site for substrate. Residues histidine 97 and histidine 107 each coordinate a divalent metal cation. The Proton donor role is filled by histidine 107. 109 to 111 (NVR) is a substrate binding site. A divalent metal cation is bound by residues histidine 146 and histidine 176. Residues 241 to 276 (YVEFNLVYDRGTLFGLQSGGRTESILMSLPPQVRWG) form an important for dimerization region. 259 to 261 (GGR) serves as a coordination point for substrate.

It belongs to the aerobic coproporphyrinogen-III oxidase family. Homodimer. A divalent metal cation is required as a cofactor.

The protein localises to the cytoplasm. The enzyme catalyses coproporphyrinogen III + O2 + 2 H(+) = protoporphyrinogen IX + 2 CO2 + 2 H2O. It functions in the pathway porphyrin-containing compound metabolism; protoporphyrin-IX biosynthesis; protoporphyrinogen-IX from coproporphyrinogen-III (O2 route): step 1/1. Involved in the heme biosynthesis. Catalyzes the aerobic oxidative decarboxylation of propionate groups of rings A and B of coproporphyrinogen-III to yield the vinyl groups in protoporphyrinogen-IX. This chain is Oxygen-dependent coproporphyrinogen-III oxidase, found in Pseudomonas savastanoi pv. phaseolicola (strain 1448A / Race 6) (Pseudomonas syringae pv. phaseolicola (strain 1448A / Race 6)).